A 374-amino-acid chain; its full sequence is MAIRKKSTKSPPVLSHEFVLQNHADIVSCVAMVFLLGLMFEITAKASIIFVTLQYNVTLPATEEQATESASLYYYGIKDLATVFFYMLVAIIIHAVIQEYMLDKINRRMHFSKTKHSKFNESGQLSAFYLFACVWGTFILISENYISDPTILWRAYPHNLMTFQMKFFYISQLAYWLHAFPELYFQKTKREDIPRQLVYIGLYLFHIAGAYLLNLNHLGLVLLVLHYFVEFLFHISRLFYFSNEKYQKGFSLWAVLFVLGRLLTLILSVLTVGFGLARAENQKLDFSTGNFNVLAVRIAVLASICITQAFMVWKFINFQLRRWREHSAFQAPAVKKKPTVTKGRSSKKGTENGVNGTLTSNVADSPRNKKEKSS.

Residues 1 to 29 (MAIRKKSTKSPPVLSHEFVLQNHADIVSC) lie on the Cytoplasmic side of the membrane. A helical membrane pass occupies residues 30-50 (VAMVFLLGLMFEITAKASIIF). The Lumenal segment spans residues 51–76 (VTLQYNVTLPATEEQATESASLYYYG). Asparagine 56 carries N-linked (GlcNAc...) asparagine glycosylation. The chain crosses the membrane as a helical span at residues 77 to 97 (IKDLATVFFYMLVAIIIHAVI). Topologically, residues 98–121 (QEYMLDKINRRMHFSKTKHSKFNE) are cytoplasmic. The 210-residue stretch at 117 to 326 (SKFNESGQLS…NFQLRRWREH (210 aa)) folds into the TLC domain. The helical transmembrane segment at 122-142 (SGQLSAFYLFACVWGTFILIS) threads the bilayer. At 143–159 (ENYISDPTILWRAYPHN) the chain is on the lumenal side. The helical transmembrane segment at 160–180 (LMTFQMKFFYISQLAYWLHAF) threads the bilayer. Topologically, residues 181–192 (PELYFQKTKRED) are cytoplasmic. Residues 193–213 (IPRQLVYIGLYLFHIAGAYLL) form a helical membrane-spanning segment. Position 214 (asparagine 214) is a topological domain, lumenal. Residues 215 to 235 (LNHLGLVLLVLHYFVEFLFHI) form a helical membrane-spanning segment. At 236 to 251 (SRLFYFSNEKYQKGFS) the chain is on the cytoplasmic side. Residues 252-272 (LWAVLFVLGRLLTLILSVLTV) form a helical membrane-spanning segment. The Lumenal segment spans residues 273-297 (GFGLARAENQKLDFSTGNFNVLAVR). A helical transmembrane segment spans residues 298–318 (IAVLASICITQAFMVWKFINF). Residues 319–374 (QLRRWREHSAFQAPAVKKKPTVTKGRSSKKGTENGVNGTLTSNVADSPRNKKEKSS) are Cytoplasmic-facing. Basic residues predominate over residues 334-347 (VKKKPTVTKGRSSK). Positions 334–374 (VKKKPTVTKGRSSKKGTENGVNGTLTSNVADSPRNKKEKSS) are disordered. Residues 352–363 (NGVNGTLTSNVA) show a composition bias toward polar residues. Residue serine 365 is modified to Phosphoserine.

Belongs to the TRAM family. Interacts with SEC61B. May interact with Derlin-1/DERL1. N-glycosylated.

The protein resides in the endoplasmic reticulum membrane. In terms of biological role, involved in the translocation of nascent protein chains into or through the endoplasmic reticulum (ER) membrane by facilitating the proper chain positioning at the SEC61 channel. Regulates the exposure of nascent secretory protein chain to the cytosol during translocation into the ER. May affect the phospholipid bilayer in the vicinity of the lateral gate of the SEC61 channel, thereby facilitating ER protein transport. Intimately associates with transmembrane (TM) domain of nascent membrane proteins during the entire integration process into the ER membrane. Associates with the second TM domain of G-protein-coupled receptor opsin/OPSD nascent chain in the ER membrane, which may facilitate its integration into the membrane. Under conditions of ER stress, participates in the disposal of misfolded ER membrane proteins during the unfolded protein response (UPR), an integrated stress response (ISR) pathway, by selectively retrotranslocating misfolded ER-membrane proteins from the ER into the cytosol where they are ubiquitinated and degraded by the proteasome. The chain is Translocating chain-associated membrane protein 1 (TRAM1) from Pongo abelii (Sumatran orangutan).